The primary structure comprises 171 residues: 16S rRNA aminocarboxypropyltransferase (171 aa).

Residues threonine 17, leucine 67, leucine 90, and threonine 109 each coordinate S-adenosyl-L-methionine.

Belongs to the TDD superfamily. TSR3 family.

Its subcellular location is the cytoplasm. It carries out the reaction an N(1)-methylpseudouridine in rRNA + S-adenosyl-L-methionine = N(1)-methyl-N(3)-[(3S)-3-amino-3-carboxypropyl]pseudouridine in rRNA + S-methyl-5'-thioadenosine + H(+). Functionally, aminocarboxypropyltransferase that catalyzes the aminocarboxypropyl transfer on pseudouridine corresponding to position 914 in M.jannaschii 16S rRNA. It constitutes the last step in biosynthesis of the hypermodified N1-methyl-N3-(3-amino-3-carboxypropyl) pseudouridine (m1acp3-Psi). This is 16S rRNA aminocarboxypropyltransferase from Methanobrevibacter smithii (strain ATCC 35061 / DSM 861 / OCM 144 / PS).